The following is a 320-amino-acid chain: Beta-ketoacyl-[acyl-carrier-protein] synthase III (320 aa).

Catalysis depends on residues Cys-114 and His-247. The segment at 248 to 252 is ACP-binding; that stretch reads QANRR. Asn-277 is a catalytic residue.

The protein belongs to the thiolase-like superfamily. FabH family. As to quaternary structure, homodimer.

Its subcellular location is the cytoplasm. It carries out the reaction malonyl-[ACP] + acetyl-CoA + H(+) = 3-oxobutanoyl-[ACP] + CO2 + CoA. The protein operates within lipid metabolism; fatty acid biosynthesis. In terms of biological role, catalyzes the condensation reaction of fatty acid synthesis by the addition to an acyl acceptor of two carbons from malonyl-ACP. Catalyzes the first condensation reaction which initiates fatty acid synthesis and may therefore play a role in governing the total rate of fatty acid production. Possesses both acetoacetyl-ACP synthase and acetyl transacylase activities. Its substrate specificity determines the biosynthesis of branched-chain and/or straight-chain of fatty acids. The chain is Beta-ketoacyl-[acyl-carrier-protein] synthase III from Neisseria gonorrhoeae (strain ATCC 700825 / FA 1090).